A 138-amino-acid polypeptide reads, in one-letter code: Large ribosomal subunit protein bL19 (138 aa).

Belongs to the bacterial ribosomal protein bL19 family.

In terms of biological role, this protein is located at the 30S-50S ribosomal subunit interface and may play a role in the structure and function of the aminoacyl-tRNA binding site. The sequence is that of Large ribosomal subunit protein bL19 from Rickettsia conorii (strain ATCC VR-613 / Malish 7).